We begin with the raw amino-acid sequence, 735 residues long: DNA ligase 1 (735 aa).

The span at 1–11 shows a compositional bias: basic and acidic residues; that stretch reads MAGDKQGDKQA. Residues 1–23 form a disordered region; the sequence is MAGDKQGDKQAETTSVPAEARER. Residues 48–52, 97–98, and Glu128 contribute to the NAD(+) site; these read DAEFD and SL. The active-site N6-AMP-lysine intermediate is the Lys130. 4 residues coordinate NAD(+): Arg151, Glu188, Lys305, and Lys329. Positions 423, 426, 442, and 448 each coordinate Zn(2+). One can recognise a BRCT domain in the interval 643-732; the sequence is EGPRPLEGLT…PEAAADVALS (90 aa).

The protein belongs to the NAD-dependent DNA ligase family. LigA subfamily. Requires Mg(2+) as cofactor. It depends on Mn(2+) as a cofactor.

The catalysed reaction is NAD(+) + (deoxyribonucleotide)n-3'-hydroxyl + 5'-phospho-(deoxyribonucleotide)m = (deoxyribonucleotide)n+m + AMP + beta-nicotinamide D-nucleotide.. Functionally, DNA ligase that catalyzes the formation of phosphodiester linkages between 5'-phosphoryl and 3'-hydroxyl groups in double-stranded DNA using NAD as a coenzyme and as the energy source for the reaction. It is essential for DNA replication and repair of damaged DNA. The sequence is that of DNA ligase 1 from Streptomyces coelicolor (strain ATCC BAA-471 / A3(2) / M145).